Here is an 800-residue protein sequence, read N- to C-terminus: Receptor-like protein 47 (800 aa).

The signal sequence occupies residues 1–31; the sequence is MMHSSSVRRMITVKWSLCLIFCLTNSILVSA. The Extracellular portion of the chain corresponds to 32–759; the sequence is KHLCLPDQKD…QDEDKEEEDQ (728 aa). N-linked (GlcNAc...) asparagine glycans are attached at residues Asn-66 and Asn-102. LRR repeat units lie at residues 109 to 131, 133 to 156, 157 to 179, 190 to 213, 214 to 238, 240 to 262, 263 to 288, 294 to 311, 312 to 334, 335 to 358, 360 to 383, 385 to 406, 407 to 430, 431 to 453, 455 to 477, 479 to 500, 502 to 523, 524 to 550, 551 to 574, 621 to 645, 646 to 669, 670 to 693, and 695 to 718; these read QHLQ…SIGN, KRLK…LGNL, SYLT…SMGN, LSSV…NMSS, LSKL…LFMI, SLIL…NISS, PSNL…IFSP, YLDV…VSLP, SPIE…LRNQ, TSLE…LWSL, ELRY…VIQG, RELL…LLPV, VSMN…ICEL, DNLR…CFEN, HLYV…AISH, LQSF…LINC, DIEF…WLEL, LPNL…SLSF, SRLR…YFVG, FTIY…IGLL, KEVI…LSNL, SNLQ…LGKL, and FLEW…QIQT. A glycan (N-linked (GlcNAc...) asparagine) is linked at Asn-155. Asn-210 is a glycosylation site (N-linked (GlcNAc...) asparagine). Asn-259 carries an N-linked (GlcNAc...) asparagine glycan. 2 N-linked (GlcNAc...) asparagine glycosylation sites follow: Asn-323 and Asn-333. The N-linked (GlcNAc...) asparagine glycan is linked to Asn-365. N-linked (GlcNAc...) asparagine glycans are attached at residues Asn-442, Asn-465, Asn-499, and Asn-514. Asn-668 is a glycosylation site (N-linked (GlcNAc...) asparagine). A glycan (N-linked (GlcNAc...) asparagine) is linked at Asn-700. The chain crosses the membrane as a helical span at residues 760–780; that stretch reads VFSWIAAAIGYVPGVVCGLTI. The Cytoplasmic segment spans residues 781-800; it reads GHILVSHKRDWFMRIVSFFT.

The protein belongs to the RLP family.

Its subcellular location is the cell membrane. In Arabidopsis thaliana (Mouse-ear cress), this protein is Receptor-like protein 47.